A 144-amino-acid chain; its full sequence is Ribosomal RNA large subunit methyltransferase H (144 aa).

S-adenosyl-L-methionine is bound by residues leucine 63, glycine 92, and 111–116 (LSAMTL).

Belongs to the RNA methyltransferase RlmH family. Homodimer.

The protein localises to the cytoplasm. The catalysed reaction is pseudouridine(1915) in 23S rRNA + S-adenosyl-L-methionine = N(3)-methylpseudouridine(1915) in 23S rRNA + S-adenosyl-L-homocysteine + H(+). Its function is as follows. Specifically methylates the pseudouridine at position 1915 (m3Psi1915) in 23S rRNA. In Prochlorococcus marinus (strain MIT 9313), this protein is Ribosomal RNA large subunit methyltransferase H.